Reading from the N-terminus, the 970-residue chain is Translation initiation factor IF-2 (970 aa).

Disordered regions lie at residues K54 to Q270 and D328 to S348. Positions Q87–P96 are enriched in low complexity. The segment covering Y98–E112 has biased composition (polar residues). Positions E121–P149 are enriched in low complexity. Composition is skewed to pro residues over residues Q150–A160 and P168–S182. A compositionally biased stretch (low complexity) spans V183–Q253. A tr-type G domain is found at I469–K638. Residues G478–T485 are G1. Residue G478–T485 coordinates GTP. The segment at G503–H507 is G2. The segment at D524–G527 is G3. Residues D524–H528 and N578–D581 each bind GTP. The interval N578 to D581 is G4. The G5 stretch occupies residues S614 to R616.

It belongs to the TRAFAC class translation factor GTPase superfamily. Classic translation factor GTPase family. IF-2 subfamily.

Its subcellular location is the cytoplasm. One of the essential components for the initiation of protein synthesis. Protects formylmethionyl-tRNA from spontaneous hydrolysis and promotes its binding to the 30S ribosomal subunits. Also involved in the hydrolysis of GTP during the formation of the 70S ribosomal complex. The polypeptide is Translation initiation factor IF-2 (Anaeromyxobacter sp. (strain Fw109-5)).